A 430-amino-acid chain; its full sequence is Enolase (430 aa).

Glutamine 166 contributes to the (2R)-2-phosphoglycerate binding site. Glutamate 208 functions as the Proton donor in the catalytic mechanism. Aspartate 245, glutamate 288, and aspartate 315 together coordinate Mg(2+). Lysine 340, arginine 369, serine 370, and lysine 391 together coordinate (2R)-2-phosphoglycerate. Lysine 340 (proton acceptor) is an active-site residue.

It belongs to the enolase family. Requires Mg(2+) as cofactor.

It is found in the cytoplasm. The protein localises to the secreted. It localises to the cell surface. The enzyme catalyses (2R)-2-phosphoglycerate = phosphoenolpyruvate + H2O. The protein operates within carbohydrate degradation; glycolysis; pyruvate from D-glyceraldehyde 3-phosphate: step 4/5. In terms of biological role, catalyzes the reversible conversion of 2-phosphoglycerate (2-PG) into phosphoenolpyruvate (PEP). It is essential for the degradation of carbohydrates via glycolysis. The chain is Enolase from Clostridium kluyveri (strain NBRC 12016).